The primary structure comprises 322 residues: Atrochrysone carboxyl ACP thioesterase dmxR1 (322 aa).

Positions 105, 107, 109, and 110 each coordinate Zn(2+). Catalysis depends on aspartate 109, which acts as the Proton donor/acceptor.

Belongs to the metallo-beta-lactamase superfamily. The cofactor is Zn(2+).

It carries out the reaction atrochrysone carboxyl-[ACP] + H2O = atrochrysone carboxylate + holo-[ACP] + H(+). The protein operates within secondary metabolite biosynthesis. Functionally, atrochrysone carboxyl ACP thioesterase; part of the gene cluster that mediates the biosynthesis of the dimeric xanthones cryptosporioptides. The pathway begins with the synthesis of atrochrysone thioester by the polyketide synthase dmx-nrPKS. The atrochrysone carboxyl ACP thioesterase dmxR1 then breaks the thioester bond and releases the atrochrysone carboxylic acid from dmx-nrPKS. Atrochrysone carboxylic acid is decarboxylated by the decarboxylase dmxR15, and oxidized by the anthrone oxygenase dmxR16 to yield emodin. Emodin is then reduced to emodin hydroquinone by the oxidoreductase dmxR7. A-ring reduction by the short chain dehydrogenase dmxR18, dehydration by the scytalone dehydratase-like protein dmxR17 and probable spontaneous re-oxidation, results in overall deoxygenation to chrysophanol. Baeyer-Villiger oxidation by the Baeyer-Villiger monooxygenase (BVMO) dmxR6 then yields monodictylactone in equilibrium with monodictyphenone. In the case of the cryptosporioptides biosynthesis, monodictylactone is reduced at C-12 to an alcohol (by the short chain dehydrogenases dmxR12 or dmxR8) and hydroxylated at C-5 by dmxR9, yielding the electron-rich aromatic which could eliminate H(2)O to form the ortho-quinonemethide, followed by tautomerisation to paraquinone and complete the formal reduction to produce the 10-methylgroup. Conjugate addition of C-4a-OH to the resulting paraquinone by the monooxygenase dmxR10 then gives cyclohexadienone, which is then reduced at C-5 by the short chain dehydrogenase dmxR3 to give the dihydroxanthone. The 6,7-epoxide in the cryptosporioptides could be introduced by the cytochrome P450 monooxygenase dmxL3. The highly reducing PKS dmxL2 manufactures butyrate, which is further carboxylated by dmxL1 to form ethylmalonate. It is not yet clear whether the carboxylation occurs while the butyrate is attached to the ACP of dmxL2, but this unusual fungal metabolite could then be esterified to O-5 by the O-acetyltransferase dmxR13. Finally, dimerization performed by dmxR5 gives the observed dimers cryptosporioptides A, B and C as the final products of the pathway. The sequence is that of Atrochrysone carboxyl ACP thioesterase dmxR1 from Cryptosporiopsis sp. (strain 8999).